We begin with the raw amino-acid sequence, 162 residues long: Putative 4-hydroxy-4-methyl-2-oxoglutarate aldolase (162 aa).

Residues 75-78 and arginine 97 contribute to the substrate site; that span reads GDML. Residue aspartate 98 coordinates a divalent metal cation.

This sequence belongs to the class II aldolase/RraA-like family. Homotrimer. It depends on a divalent metal cation as a cofactor.

The enzyme catalyses 4-hydroxy-4-methyl-2-oxoglutarate = 2 pyruvate. It catalyses the reaction oxaloacetate + H(+) = pyruvate + CO2. In terms of biological role, catalyzes the aldol cleavage of 4-hydroxy-4-methyl-2-oxoglutarate (HMG) into 2 molecules of pyruvate. Also contains a secondary oxaloacetate (OAA) decarboxylase activity due to the common pyruvate enolate transition state formed following C-C bond cleavage in the retro-aldol and decarboxylation reactions. The chain is Putative 4-hydroxy-4-methyl-2-oxoglutarate aldolase from Pseudomonas syringae pv. tomato (strain ATCC BAA-871 / DC3000).